A 160-amino-acid polypeptide reads, in one-letter code: Allophycocyanin alpha chain (160 aa).

An N4-methylasparagine modification is found at Asn-70. Cys-80 provides a ligand contact to (2R,3E)-phycocyanobilin.

It belongs to the phycobiliprotein family. Component of the phycobilisome. Heterodimer of an alpha and a beta chain. In terms of processing, contains one covalently linked phycocyanobilin chromophore.

It is found in the cellular thylakoid membrane. Light-harvesting photosynthetic bile pigment-protein from the phycobiliprotein complex. Allophycocyanin has a maximum absorption at approximately 650 nanometers. This Mastigocladus laminosus (Fischerella sp.) protein is Allophycocyanin alpha chain (apcA).